Consider the following 950-residue polypeptide: 5'-3' exoribonuclease 2 (950 aa).

Residues 262–278 (PCGLCNQFGHEVKDCEG) form a CCHC-type zinc finger. Lysine 286 is subject to N6-acetyllysine. Residues 408 to 508 (KDDEDSFRRR…SDSEPEPEDN (101 aa)) form a disordered region. Over residues 416-426 (RRQKEKRKRMK) the composition is skewed to basic residues. The residue at position 439 (threonine 439) is a Phosphothreonine. A compositionally biased stretch (polar residues) spans 445–458 (SRNSPGSQVASNPR). Phosphoserine occurs at positions 448, 471, 473, 475, 482, 487, 499, 501, and 678. Residues 468–482 (NNSSPSISPNTSFTS) are compositionally biased toward low complexity. Residues arginine 824, arginine 847, and arginine 851 each carry the asymmetric dimethylarginine; alternate modification. Omega-N-methylarginine; alternate occurs at positions 824, 847, and 851. The residue at position 880 (arginine 880) is an Asymmetric dimethylarginine. Arginine 883 carries the asymmetric dimethylarginine; alternate modification. An Omega-N-methylarginine; alternate modification is found at arginine 883. Arginine 895 carries the post-translational modification Omega-N-methylarginine. The tract at residues 911–950 (MLAGPGGYPPRRDDRGGRQGYPREGRKYPLPPPSGRYNWN) is disordered. A compositionally biased stretch (basic and acidic residues) spans 920 to 937 (PRRDDRGGRQGYPREGRK). Residue arginine 946 is modified to Asymmetric dimethylarginine; alternate. An Omega-N-methylarginine; alternate modification is found at arginine 946.

Belongs to the 5'-3' exonuclease family. XRN2/RAT1 subfamily. Interacts with POLR2A and SMN1/SMN2. Interacts with CDKN2AIP and NKRF. Interacts with CDKN2AIPNL; the interaction is direct. Interacts with TRIM71 (via NHL repeats) in an RNA-dependent manner. Interacts with DHX34; the interaction is RNA-independent. In terms of tissue distribution, expressed in the spleen, thymus, prostate, testis, ovary, small intestine, colon, peripheral blood leukocytes, heart, brain, placenta, lung, liver, skeletal muscle, kidney, and pancreas. Isoform 2 is expressed predominantly in peripheral blood leukocytes.

It localises to the nucleus. The protein resides in the nucleolus. Possesses 5'-&gt;3' exoribonuclease activity. May promote the termination of transcription by RNA polymerase II. During transcription termination, cleavage at the polyadenylation site liberates a 5' fragment which is subsequently processed to form the mature mRNA and a 3' fragment which remains attached to the elongating polymerase. The processive degradation of this 3' fragment by this protein may promote termination of transcription. Binds to RNA polymerase II (RNAp II) transcription termination R-loops formed by G-rich pause sites. This Homo sapiens (Human) protein is 5'-3' exoribonuclease 2 (XRN2).